Consider the following 172-residue polypeptide: 16S rRNA aminocarboxypropyltransferase (172 aa).

Thr-21, Leu-71, Leu-93, and Thr-112 together coordinate S-adenosyl-L-methionine.

It belongs to the TDD superfamily. TSR3 family.

The protein resides in the cytoplasm. The catalysed reaction is an N(1)-methylpseudouridine in rRNA + S-adenosyl-L-methionine = N(1)-methyl-N(3)-[(3S)-3-amino-3-carboxypropyl]pseudouridine in rRNA + S-methyl-5'-thioadenosine + H(+). Aminocarboxypropyltransferase that catalyzes the aminocarboxypropyl transfer on pseudouridine at position 914 in 16S rRNA. It constitutes the last step in biosynthesis of the hypermodified N1-methyl-N3-(3-amino-3-carboxypropyl) pseudouridine (m1acp3-Psi). This chain is 16S rRNA aminocarboxypropyltransferase, found in Methanocaldococcus jannaschii (strain ATCC 43067 / DSM 2661 / JAL-1 / JCM 10045 / NBRC 100440) (Methanococcus jannaschii).